The sequence spans 173 residues: dCTP deaminase, dUMP-forming (173 aa).

DCTP-binding positions include 93-98, Asp111, 119-121, Gln138, and Tyr151; these read RSSIGR and TLE. The Proton donor/acceptor role is filled by Glu121.

The protein belongs to the dCTP deaminase family. In terms of assembly, homotrimer.

It carries out the reaction dCTP + 2 H2O = dUMP + NH4(+) + diphosphate. The protein operates within pyrimidine metabolism; dUMP biosynthesis; dUMP from dCTP: step 1/1. Its function is as follows. Bifunctional enzyme that catalyzes both the deamination of dCTP to dUTP and the hydrolysis of dUTP to dUMP without releasing the toxic dUTP intermediate. The chain is dCTP deaminase, dUMP-forming from Clostridium acetobutylicum (strain ATCC 824 / DSM 792 / JCM 1419 / IAM 19013 / LMG 5710 / NBRC 13948 / NRRL B-527 / VKM B-1787 / 2291 / W).